A 229-amino-acid polypeptide reads, in one-letter code: Large ribosomal subunit protein uL1 (229 aa).

Belongs to the universal ribosomal protein uL1 family. Part of the 50S ribosomal subunit.

Its function is as follows. Binds directly to 23S rRNA. The L1 stalk is quite mobile in the ribosome, and is involved in E site tRNA release. In terms of biological role, protein L1 is also a translational repressor protein, it controls the translation of the L11 operon by binding to its mRNA. The sequence is that of Large ribosomal subunit protein uL1 from Ureaplasma parvum serovar 3 (strain ATCC 27815 / 27 / NCTC 11736).